A 161-amino-acid chain; its full sequence is Putative pre-16S rRNA nuclease (161 aa).

Belongs to the YqgF nuclease family.

It is found in the cytoplasm. Functionally, could be a nuclease involved in processing of the 5'-end of pre-16S rRNA. In Bradyrhizobium sp. (strain BTAi1 / ATCC BAA-1182), this protein is Putative pre-16S rRNA nuclease.